The primary structure comprises 386 residues: Succinate--CoA ligase [ADP-forming] subunit beta (386 aa).

Positions K9–R244 constitute an ATP-grasp domain. ATP is bound by residues K46, G53–G55, E99, C102, and E107. Mg(2+)-binding residues include N199 and D213. Residues N264 and G321–M323 contribute to the substrate site.

It belongs to the succinate/malate CoA ligase beta subunit family. As to quaternary structure, heterotetramer of two alpha and two beta subunits. Mg(2+) is required as a cofactor.

The enzyme catalyses succinate + ATP + CoA = succinyl-CoA + ADP + phosphate. It catalyses the reaction GTP + succinate + CoA = succinyl-CoA + GDP + phosphate. The protein operates within carbohydrate metabolism; tricarboxylic acid cycle; succinate from succinyl-CoA (ligase route): step 1/1. Functionally, succinyl-CoA synthetase functions in the citric acid cycle (TCA), coupling the hydrolysis of succinyl-CoA to the synthesis of either ATP or GTP and thus represents the only step of substrate-level phosphorylation in the TCA. The beta subunit provides nucleotide specificity of the enzyme and binds the substrate succinate, while the binding sites for coenzyme A and phosphate are found in the alpha subunit. This chain is Succinate--CoA ligase [ADP-forming] subunit beta, found in Rickettsia massiliae (strain Mtu5).